Here is a 229-residue protein sequence, read N- to C-terminus: Putative N-acetylmannosamine-6-phosphate 2-epimerase (229 aa).

Belongs to the NanE family.

It carries out the reaction an N-acyl-D-glucosamine 6-phosphate = an N-acyl-D-mannosamine 6-phosphate. Its pathway is amino-sugar metabolism; N-acetylneuraminate degradation; D-fructose 6-phosphate from N-acetylneuraminate: step 3/5. Converts N-acetylmannosamine-6-phosphate (ManNAc-6-P) to N-acetylglucosamine-6-phosphate (GlcNAc-6-P). In Actinobacillus pleuropneumoniae serotype 5b (strain L20), this protein is Putative N-acetylmannosamine-6-phosphate 2-epimerase.